A 471-amino-acid polypeptide reads, in one-letter code: MEYNKKIVTDLTDLKGKKVILRCDFNVPINKTSGEITDYTRIDAALQTINYLLDKGVKLIVLSHLSRVKTLEDISSGKKSLKVVHKALKNRLLGKTVLFEENNRNKDLPKIIDGMEEGSLLLLENTRYADVNEKGEVVKLESKNDPSLGKFWASLADIFVNDAFGTSHRAHASNVGIAKNIKESAIGFLVNKELAKLSKAVVNPRKPVVAIFGGAKVSDKVPSIKNIGKFADKILIGGGMAFIFLKAKGFEIGKSLYEDDQLELTKELLSEFGNKIVLPVDAVVADSIKAAKGKRYDMEQFPADLAGFDVGKKTIKLFKKELKLAETVIWNGPLGVFENDAFNKGTLKVCKYIAKITAKKGCYSVIGGGDSAAAAAKCGVTHSFSHISTGGGASLEFFSGVELPGVACIKNKGEEGKVEAVKEKTTTTTESASKEKSSTAKTASKPATSKTTAAKKPAEKKPAAKKPAAKK.

Substrate is bound by residues 24–26 (DFN), arginine 41, 64–67 (HLSR), arginine 127, and arginine 169. ATP-binding positions include lysine 220, glycine 307, glutamate 338, and 368 to 371 (GGDS). Positions 417 to 471 (KVEAVKEKTTTTTESASKEKSSTAKTASKPATSKTTAAKKPAEKKPAAKKPAAKK) are disordered. Over residues 439-455 (TAKTASKPATSKTTAAK) the composition is skewed to low complexity.

Belongs to the phosphoglycerate kinase family. As to quaternary structure, monomer.

Its subcellular location is the cytoplasm. The enzyme catalyses (2R)-3-phosphoglycerate + ATP = (2R)-3-phospho-glyceroyl phosphate + ADP. The protein operates within carbohydrate degradation; glycolysis; pyruvate from D-glyceraldehyde 3-phosphate: step 2/5. In Malacoplasma penetrans (strain HF-2) (Mycoplasma penetrans), this protein is Phosphoglycerate kinase.